Consider the following 567-residue polypeptide: MSIISRQAYADMFGPTTGDRVRLADTELWLEVEKDFTIYGDEVKFGGGKVIRDGQGQGQALSRDCLDLVITNALIIDHWGIVKADIGVKNGRIAGIGKAGNPDVQPGVTLVIGPGTEVIAGEGSIVTAGGIDSHIHFICPQQIDEALCSGVTTMLGGGTGPATGTNATTCTPGPWYMARMLEAAESLPMNLGFLGKGNASLPDALHEQVAAGAIGLKLHEDWGSTPASINNCLNVAEETDTQVAIHTDTLNESGFVEDTLAAIGDRTIHTYHTEGAGGGHAPDIIRACGLANVLPSSTNPTRPYTVNTVDEHLDMLMVCHHLDPAIPEDVAFAESRIRRETIAAEDILHDLGAFSMISSDSQAMGRVGEVITRTWQTAHKMKVQRGSLGSDPARHDNTRIKRYIAKYTINPALAHGISHEVGSIEPGKLADLVLWRPAFFGVKPSMILKGGMIAAAPMGDANASIPTPQPVHFRPMFGALGRAMHSTRMTFLSGLAIRSGLPAQLGLNSLIGEVKNCRSVKKAHMIHNDWQPLIEVDSQTYQVRANGELLTCEPAAVLPMAQRYFLF.

One can recognise a Urease domain in the interval 129 to 567 (GGIDSHIHFI…LPMAQRYFLF (439 aa)). The Ni(2+) site is built by His134, His136, and Lys217. N6-carboxylysine is present on Lys217. A substrate-binding site is contributed by His219. 2 residues coordinate Ni(2+): His246 and His272. His320 (proton donor) is an active-site residue. Asp360 is a binding site for Ni(2+).

Belongs to the metallo-dependent hydrolases superfamily. Urease alpha subunit family. As to quaternary structure, heterotrimer of UreA (gamma), UreB (beta) and UreC (alpha) subunits. Three heterotrimers associate to form the active enzyme. It depends on Ni cation as a cofactor. Post-translationally, carboxylation allows a single lysine to coordinate two nickel ions.

It is found in the cytoplasm. The catalysed reaction is urea + 2 H2O + H(+) = hydrogencarbonate + 2 NH4(+). It functions in the pathway nitrogen metabolism; urea degradation; CO(2) and NH(3) from urea (urease route): step 1/1. This chain is Urease subunit alpha, found in Tolumonas auensis (strain DSM 9187 / NBRC 110442 / TA 4).